Consider the following 244-residue polypeptide: Leucyl/phenylalanyl-tRNA--protein transferase (244 aa).

Residues 1–22 (MHSQPYLLSPAPNNTPFPPAEH) form a disordered region.

This sequence belongs to the L/F-transferase family.

It is found in the cytoplasm. The catalysed reaction is N-terminal L-lysyl-[protein] + L-leucyl-tRNA(Leu) = N-terminal L-leucyl-L-lysyl-[protein] + tRNA(Leu) + H(+). It carries out the reaction N-terminal L-arginyl-[protein] + L-leucyl-tRNA(Leu) = N-terminal L-leucyl-L-arginyl-[protein] + tRNA(Leu) + H(+). The enzyme catalyses L-phenylalanyl-tRNA(Phe) + an N-terminal L-alpha-aminoacyl-[protein] = an N-terminal L-phenylalanyl-L-alpha-aminoacyl-[protein] + tRNA(Phe). Functions in the N-end rule pathway of protein degradation where it conjugates Leu, Phe and, less efficiently, Met from aminoacyl-tRNAs to the N-termini of proteins containing an N-terminal arginine or lysine. The sequence is that of Leucyl/phenylalanyl-tRNA--protein transferase from Xylella fastidiosa (strain M12).